The chain runs to 117 residues: Transcription elongation factor A protein-like 8 (117 aa).

Composition is skewed to basic and acidic residues over residues 1-24 and 61-74; these read MQKS…DRPL and YKED…DPEE. A disordered region spans residues 1-74; the sequence is MQKSCGENER…SPVRHLDPEE (74 aa). A coiled-coil region spans residues 73–100; sequence EEMIRGADELERLREEIRRVRNKFVMMH.

It belongs to the TFS-II family. TFA subfamily.

It is found in the nucleus. Its function is as follows. May be involved in transcriptional regulation. This chain is Transcription elongation factor A protein-like 8 (TCEAL8), found in Bos taurus (Bovine).